Reading from the N-terminus, the 200-residue chain is ATP-dependent Clp protease proteolytic subunit 2 (200 aa).

Serine 100 (nucleophile) is an active-site residue.

It belongs to the peptidase S14 family. As to quaternary structure, fourteen ClpP subunits assemble into 2 heptameric rings which stack back to back to give a disk-like structure with a central cavity, resembling the structure of eukaryotic proteasomes.

The protein localises to the cytoplasm. It carries out the reaction Hydrolysis of proteins to small peptides in the presence of ATP and magnesium. alpha-casein is the usual test substrate. In the absence of ATP, only oligopeptides shorter than five residues are hydrolyzed (such as succinyl-Leu-Tyr-|-NHMec, and Leu-Tyr-Leu-|-Tyr-Trp, in which cleavage of the -Tyr-|-Leu- and -Tyr-|-Trp bonds also occurs).. Functionally, cleaves peptides in various proteins in a process that requires ATP hydrolysis. Has a chymotrypsin-like activity. Plays a major role in the degradation of misfolded proteins. This Streptomyces avermitilis (strain ATCC 31267 / DSM 46492 / JCM 5070 / NBRC 14893 / NCIMB 12804 / NRRL 8165 / MA-4680) protein is ATP-dependent Clp protease proteolytic subunit 2.